We begin with the raw amino-acid sequence, 650 residues long: MIRNNKSMFIKLKDQSSYEMPSGSTAKDLADKLNLKGPHEALGASINGKTVDLSYPLQEGDQVILWGFNDPEGKEIFWHTSAHVLAQAILRLWPDAQPTIGPPIENGFYYDFANLTISDADFEKIEKEMQAIISENFQIKREVISTKSDALKQFQNNPYKCELINSFEDESTLTGYRQGEFYDLCRGPHLFNLGKIKALKLMKTAGAYWRGDSNKEMLTRIYAISFPDRKLLKDYLHQLEEAKKRDHKLLGAKLDLFSLKEEAPGMPFIHPKGLIVWNQLVAYIRECLSRHDYIEIKTPTMMTKELWEISGHWGNYRQNMFISQIEDRDFAIKPMNCPGCMLYYKSHTHSYRELPLRIAEIGNVHRYEPSGSLSGLFRVRSFHQDDAHIFMKPSDIQQEILGVLALADEIYSTFGLSYRLELSTRPEKNTIGTDHEWEVATAGLKGALDEMGKEYRINEGDGAFYGPKIDFHIRDAINRSWQCGTIQLDMALPEKFELEYTFSDGTRQRPVMIHRAIFGSIERFFGILIEHYVGKFPLWLSPSQIRFITVADRHEPYARELAKRFKNAGFHVDVDSTQESVSKKVRNAQLAQFNYILTIGDQEVEHKTANLRTRDNVVHGEIQIDEFIQKLEIEKQQRQSHSPYASAERN.

The region spanning 5 to 67 (NKSMFIKLKD…QEGDQVILWG (63 aa)) is the TGS domain. Residues 246-537 (DHKLLGAKLD…LIEHYVGKFP (292 aa)) are catalytic. Cys337, His388, and His514 together coordinate Zn(2+).

The protein belongs to the class-II aminoacyl-tRNA synthetase family. Homodimer. Requires Zn(2+) as cofactor.

Its subcellular location is the cytoplasm. It catalyses the reaction tRNA(Thr) + L-threonine + ATP = L-threonyl-tRNA(Thr) + AMP + diphosphate + H(+). Its function is as follows. Catalyzes the attachment of threonine to tRNA(Thr) in a two-step reaction: L-threonine is first activated by ATP to form Thr-AMP and then transferred to the acceptor end of tRNA(Thr). Also edits incorrectly charged L-seryl-tRNA(Thr). The protein is Threonine--tRNA ligase of Protochlamydia amoebophila (strain UWE25).